Reading from the N-terminus, the 497-residue chain is Probable cytosol aminopeptidase (497 aa).

Mn(2+) is bound by residues Lys264 and Asp269. Lys276 is a catalytic residue. 3 residues coordinate Mn(2+): Asp287, Asp347, and Glu349. The active site involves Arg351.

Belongs to the peptidase M17 family. Mn(2+) is required as a cofactor.

It localises to the cytoplasm. It catalyses the reaction Release of an N-terminal amino acid, Xaa-|-Yaa-, in which Xaa is preferably Leu, but may be other amino acids including Pro although not Arg or Lys, and Yaa may be Pro. Amino acid amides and methyl esters are also readily hydrolyzed, but rates on arylamides are exceedingly low.. The catalysed reaction is Release of an N-terminal amino acid, preferentially leucine, but not glutamic or aspartic acids.. Presumably involved in the processing and regular turnover of intracellular proteins. Catalyzes the removal of unsubstituted N-terminal amino acids from various peptides. This chain is Probable cytosol aminopeptidase, found in Thermosynechococcus vestitus (strain NIES-2133 / IAM M-273 / BP-1).